The following is a 121-amino-acid chain: Surface glycoprotein CD59 homolog (121 aa).

Positions Met1–Ser19 are cleaved as a signal peptide. Residues Leu20–Lys104 enclose the UPAR/Ly6 domain. 5 cysteine pairs are disulfide-bonded: Cys22-Cys45, Cys25-Cys32, Cys38-Cys58, Cys64-Cys82, and Cys83-Cys88. A glycan (N-linked (GlcNAc...) asparagine; by host) is linked at Asn24. Asn96 carries the GPI-anchor amidated asparagine; by host lipid modification. Positions Ile97–Leu121 are cleaved as a propeptide — removed in mature form.

The protein resides in the host cell membrane. This is Surface glycoprotein CD59 homolog (15) from Saimiriine herpesvirus 2 (strain 11) (SaHV-2).